Reading from the N-terminus, the 2039-residue chain is Methylcytosine dioxygenase TET1 (2039 aa).

Residues 1–19 (MSRSRPAKPSKSVKTKLQK) show a composition bias toward basic residues. 3 disordered regions span residues 1-79 (MSRS…AGAA), 119-168 (VVTP…NGEQ), and 227-286 (DNEC…GFPD). Basic and acidic residues-rich tracts occupy residues 53 to 65 (KRRDGKKETEDKT) and 138 to 149 (IQDEPGVKHSEN). 2 stretches are compositionally biased toward polar residues: residues 150–168 (DSVPSQHATVSPGTENGEQ) and 241–265 (QRSTSEVTSQKNTSNQLADLSSQVE). The interval 512 to 657 (LDLTQGSQAA…NGPKSESMDC (146 aa)) is sufficient for binding to genomic CpG islands. Residues 567–608 (ERRKRKACGVCEPCQQKANCGECTYCKNRKNSHQICKKRKCE) form a CXXC-type zinc finger. Zn(2+) is bound by residues C574, C577, C580, C586, C589, C592, C602, and C607. Disordered stretches follow at residues 613 to 670 (KPEA…QRLD), 711 to 735 (CDANLTGVENPQPSEDDKQQTNPSP), 820 to 859 (GAEPTIFNNHPNTHSAGSRPHPPEKVPNKEPKDGSPVQPS), 882 to 906 (QLSEAPSESSSPSKPEKDEEAHQKT), 964 to 993 (QGYPSSPTAEKKGAAGGRAPFDGFENSHPL), 1050 to 1129 (VRNA…KKQE), 1209 to 1240 (VEPSDSLPTCQFKTESGGQTFAEPADNSQGQP), and 1322 to 1341 (KREAQTSSNGPLGPTTDSAQ). The segment covering 653-670 (ESMDCSRRGHGEEEQRLD) has biased composition (basic and acidic residues). Polar residues predominate over residues 825 to 835 (IFNNHPNTHSA). The span at 840–852 (HPPEKVPNKEPKD) shows a compositional bias: basic and acidic residues. S854 bears the Phosphoserine mark. Residues 884-894 (SEAPSESSSPS) are compositionally biased toward low complexity. Over residues 895–904 (KPEKDEEAHQ) the composition is skewed to basic and acidic residues. The segment covering 1053–1064 (AESTPESLVAKN) has biased composition (polar residues). Residues 1094–1116 (KPKKAQKKARATPHANKRKKKPP) are compositionally biased toward basic residues. Polar residues-rich tracts occupy residues 1214-1227 (SLPTCQFKTESGGQ) and 1326-1341 (QTSSNGPLGPTTDSAQ). 5 residues coordinate Zn(2+): C1371, C1373, C1430, H1456, and C1458. R1499 serves as a coordination point for 2-oxoglutarate. Zn(2+) contacts are provided by C1509, C1511, C1527, and C1536. Residues 1528-1541 (SWSMYFNGCKFGRS) form an interaction with DNA region. K1537 is covalently cross-linked (Glycyl lysine isopeptide (Lys-Gly) (interchain with G-Cter in ubiquitin)). A Zn(2+)-binding site is contributed by C1628. Position 1644 (C1644) interacts with 2-oxoglutarate. Zn(2+) is bound at residue H1650. The Fe cation site is built by H1652 and D1654. N1657 lines the substrate pocket. H1685 contacts 2-oxoglutarate. Residues 1734–1743 (GKRAKMKQNH) show a composition bias toward basic residues. Disordered stretches follow at residues 1734-1760 (GKRAKMKQNHNKSGSHNTKSFSSASST) and 1830-1901 (AAHP…LPQL). A compositionally biased stretch (low complexity) spans 1748 to 1760 (SHNTKSFSSASST). Polar residues predominate over residues 1850-1875 (TSPSEQLTSNQSNQQLPLLSNSQKLA). Residues 1880–1895 (EDERHPEADEPQHPED) show a composition bias toward basic and acidic residues. Residue H1939 participates in Fe cation binding. Residue 1954–1956 (RVS) participates in 2-oxoglutarate binding. 1960–1962 (YQH) contacts substrate. H1970 serves as a coordination point for Zn(2+).

This sequence belongs to the TET family. As to quaternary structure, interacts with SIN3A; recruits the transcriptional co-repressor SIN3A to gene promoters. Interacts with HCFC1. Interacts (via C-terminus) with OGT. Found in a complex composed of at least SINHCAF, SIN3A, HDAC1, SAP30, RBBP4, OGT and TET1. Interacts with QSER1. Interacts with NONO (via DNA-binding domain); this interaction recruits TET1 to genomic loci. Interacts with FOXA2; this interaction may recruit TET1 to specific enhancers to preserve their unmethylated status and hence allowing gene expression. Interacts with RNF2. Directly interacts (via C-terminus) with the DCAF1 component of the CRL4(VprBP) E3 ubiquitin-protein ligase complex. In terms of assembly, interacts with UHRF1; this interaction induces the recruitment of TET1 to replicating heterochromatin. Interacts with DCAF1. The cofactor is Fe(2+). Zn(2+) serves as cofactor. Glycosylated. Interaction with OGT leads to GlcNAcylation. Post-translationally, monoubiquitinated by the DCX (DDB1-CUL4-X-box) E3 ubiquitin-protein ligase complex called CRL4(VprBP) or CUL4A-RBX1-DDB1-DCAF1/VPRBP complex. In terms of processing, monoubiquitinated by the DCX (DDB1-CUL4-X-box) E3 ubiquitin-protein ligase complex called CRL4(VprBP) or CUL4A-RBX1-DDB1-DCAF1/VPRBP complex; this modification promotes binding to DNA. In terms of tissue distribution, expressed in germinal vesicle (GV) stage and MII-stage oocytes and in early embryos. Also detected somatic tissues, including brain, liver and kidney, but at very low levels. As to expression, predominantly expressed in early embryos. Also expressed in embryonic stem cells and in primordial germ cells. Expressed in adult tissues, including brain cortex, cerebellum, heart, kidney, liver, muscle and spleen, although at much lower levels than isoform 2. In the brain, expressed at higher levels in glial cells than in neurons. Expressed in placenta. Expressed in the pituitary, most probably in thyrotropes. Preferentially expressed in differentiated cells, including in cerebral cortex, cerebellum and thymus. Also expressed in heart, kidney, liver, muscle and spleen at much higher levels than isoform 1. In the brain, expressed at higher levels in neurons than in glial cells. Expressed in the olfactory bulb and in the mammary gland.

It localises to the nucleus. The protein resides in the chromosome. It carries out the reaction a 5-methyl-2'-deoxycytidine in DNA + 2-oxoglutarate + O2 = a 5-hydroxymethyl-2'-deoxycytidine in DNA + succinate + CO2. It catalyses the reaction a 5-hydroxymethyl-2'-deoxycytidine in DNA + 2-oxoglutarate + O2 = a 5-formyl-2'-deoxycytidine in DNA + succinate + CO2 + H2O. The catalysed reaction is a 5-formyl-2'-deoxycytidine in DNA + 2-oxoglutarate + O2 = a 5-carboxyl-2'-deoxycytidine in DNA + succinate + CO2 + H(+). Its function is as follows. Dioxygenase that plays a key role in active DNA demethylation, by catalyzing the sequential oxidation of the modified genomic base 5-methylcytosine (5mC) into 5-hydroxymethylcytosine (5hmC), 5-formylcytosine (5fC), and 5-carboxylcytosine (5caC). In addition to its role in DNA demethylation, plays a more general role in chromatin regulation by recruiting histone modifying protein complexes to alter histone marks and chromatin accessibility, leading to both activation and repression of gene expression. Plays therefore a role in many biological processes, including stem cell maintenance, T- and B-cell development, inflammation regulation, iron homeostasis, neural activity or DNA repair. Involved in the balance between pluripotency and lineage commitment of cells it plays a role in embryonic stem cells maintenance and inner cell mass cell specification. Together with QSER1, plays an essential role in the protection and maintenance of transcriptional and developmental programs to inhibit the binding of DNMT3A/3B and therefore de novo methylation. May play a role in the pancreatic beta-cell specification during development. In this context, may function as an upstream epigenetic regulator of PAX4 presumably through direct recruitment by FOXA2 to a PAX4 enhancer to preserve its unmethylated status, thereby potentiating PAX4 expression to adopt beta-cell fate during endocrine lineage commitment. Under DNA hypomethylation conditions, such as in female meiotic germ cells, may induce epigenetic reprogramming of pericentromeric heterochromatin (PCH), the constitutive heterochromatin of pericentromeric regions. PCH forms chromocenters in the interphase nucleus and chromocenters cluster at the prophase of meiosis. In this context, may also be essential for chromocenter clustering in a catalytic activity-independent manner, possibly through the recruitment polycomb repressive complex 1 (PRC1) to the chromocenters. During embryonic development, may be required for normal meiotic progression in oocytes and meiotic gene activation. Binds preferentially to DNA containing cytidine-phosphate-guanosine (CpG) dinucleotides over CpH (H=A, T, and C), hemimethylated-CpG and hemimethylated-hydroxymethyl-CpG. In terms of biological role, dioxygenase that plays a key role in active DNA demethylation. Binds to promoters, particularly to those with high CG content. In hippocampal neurons, isoform 1 regulates the expression of a unique subset of genes compared to isoform 2, although some overlap between both isoforms, hence differentially regulates excitatory synaptic transmission. In hippocampal neuron cell cultures, isoform 1 controls both miniature excitatory postsynaptic current amplitude and frequency. Isoform 1 may regulate genes involved in hippocampal-dependent memory, leading to positive regulation of memory, contrary to isoform 2 that may decrease memory. Dioxygenase that plays a key role in active DNA demethylation. As isoform 1, binds to promoters, particularly to those with high CG content, however displays reduced global chromatin affinity compared with isoform 1, leading to decreased global DNA demethylation compared with isoform 1. Contrary to isoform 1, isoform 2 localizes during S phase to sites of ongoing DNA replication in heterochromatin, causing a significant de novo 5hmC formation, globally, and more so in heterochromatin, including LINE 1 interspersed DNA repeats leading to their activation. In hippocampal neurons, isoform 2 regulates the expression of a unique subset of genes compared with isoform 1, although some overlap between both isoforms, hence differentially regulating excitatory synaptic transmission. In hippocampal neuron cell cultures, isoform 2 controls miniature excitatory postsynaptic current frequency, but not amplitude. Isoform 2 may regulate genes involved in hippocampal-dependent memory, leading to negative regulation of memory, contrary to isoform 1 that may improve memory. In immature and partially differentiated gonadotrope cells, represses luteinizing hormone gene LHB expression directly and does not catalyze 5hmC at the gene promoter. This Mus musculus (Mouse) protein is Methylcytosine dioxygenase TET1 (Tet1).